Reading from the N-terminus, the 784-residue chain is LPS-assembly protein LptD (784 aa).

The N-terminal stretch at 1-24 is a signal peptide; it reads MKKRIPTLLATMIATALYSQQGLA. 2 disulfide bridges follow: cysteine 31-cysteine 724 and cysteine 173-cysteine 725.

This sequence belongs to the LptD family. As to quaternary structure, component of the lipopolysaccharide transport and assembly complex. Interacts with LptE and LptA. In terms of processing, contains two intramolecular disulfide bonds.

It localises to the cell outer membrane. In terms of biological role, together with LptE, is involved in the assembly of lipopolysaccharide (LPS) at the surface of the outer membrane. This is LPS-assembly protein LptD from Shigella sonnei (strain Ss046).